A 969-amino-acid polypeptide reads, in one-letter code: Protein translocase subunit SecA (969 aa).

Residues Q99, 117 to 121, and D631 contribute to the ATP site; that span reads GEGKT.

It belongs to the SecA family. As to quaternary structure, monomer and homodimer. Part of the essential Sec protein translocation apparatus which comprises SecA, SecYEG and auxiliary proteins SecDF. Other proteins may also be involved.

The protein resides in the cell inner membrane. Its subcellular location is the cytoplasm. The catalysed reaction is ATP + H2O + cellular proteinSide 1 = ADP + phosphate + cellular proteinSide 2.. Part of the Sec protein translocase complex. Interacts with the SecYEG preprotein conducting channel. Has a central role in coupling the hydrolysis of ATP to the transfer of proteins into and across the cell membrane, serving as an ATP-driven molecular motor driving the stepwise translocation of polypeptide chains across the membrane. This is Protein translocase subunit SecA from Chlamydia trachomatis serovar D (strain ATCC VR-885 / DSM 19411 / UW-3/Cx).